The sequence spans 221 residues: PKHD-type hydroxylase P9215_13741 (221 aa).

In terms of domain architecture, Fe2OG dioxygenase spans 80 to 174; sequence RIHGTMFTKT…RFVVVGWIES (95 aa). 3 residues coordinate Fe cation: H98, D100, and H155. R165 contacts 2-oxoglutarate.

The cofactor is Fe(2+). L-ascorbate is required as a cofactor.

This chain is PKHD-type hydroxylase P9215_13741, found in Prochlorococcus marinus (strain MIT 9215).